The sequence spans 104 residues: Large ribosomal subunit protein uL24 (104 aa).

Belongs to the universal ribosomal protein uL24 family. Part of the 50S ribosomal subunit.

In terms of biological role, one of two assembly initiator proteins, it binds directly to the 5'-end of the 23S rRNA, where it nucleates assembly of the 50S subunit. Functionally, one of the proteins that surrounds the polypeptide exit tunnel on the outside of the subunit. The chain is Large ribosomal subunit protein uL24 from Shewanella sp. (strain W3-18-1).